Consider the following 284-residue polypeptide: 4-diphosphocytidyl-2-C-methyl-D-erythritol kinase (284 aa).

Residue Lys-14 is part of the active site. 98–108 contributes to the ATP binding site; sequence PMGGGIGGGSS. Asp-140 is an active-site residue.

This sequence belongs to the GHMP kinase family. IspE subfamily.

It carries out the reaction 4-CDP-2-C-methyl-D-erythritol + ATP = 4-CDP-2-C-methyl-D-erythritol 2-phosphate + ADP + H(+). It functions in the pathway isoprenoid biosynthesis; isopentenyl diphosphate biosynthesis via DXP pathway; isopentenyl diphosphate from 1-deoxy-D-xylulose 5-phosphate: step 3/6. Catalyzes the phosphorylation of the position 2 hydroxy group of 4-diphosphocytidyl-2C-methyl-D-erythritol. The chain is 4-diphosphocytidyl-2-C-methyl-D-erythritol kinase from Shewanella loihica (strain ATCC BAA-1088 / PV-4).